We begin with the raw amino-acid sequence, 666 residues long: Endogenous retrovirus group K member 6 Gag polyprotein (666 aa).

G2 carries N-myristoyl glycine lipidation. Residues 165-264 (GKGPELVGPS…APPSRQGSKL (100 aa)) are disordered. A compositionally biased stretch (pro residues) spans 232 to 247 (GMPPAPQGRAPYPQPP). 2 consecutive CCHC-type zinc fingers follow at residues 544-561 (RKCYNCGQIGHLKKNCPV) and 580-597 (DLCPRCKKGKHWASQCRS). The interval 598-642 (KFDKNGQPLSGNEQRGQPQAPQQTGAFPIQPFVPQGFQGQQPPLS) is disordered. Residues 604 to 622 (QPLSGNEQRGQPQAPQQTG) show a composition bias toward polar residues. The span at 624–640 (FPIQPFVPQGFQGQQPP) shows a compositional bias: low complexity.

It belongs to the beta type-B retroviral Gag protein family. HERV class-II K(HML-2) gag subfamily. Myristoylation is essential for retroviral assembly. Alteration of the glycine residue leads to a block in the budding of particles and an accumulation of Gag inside the cell. In terms of processing, specific enzymatic cleavages may yield mature proteins.

The protein localises to the cell membrane. Functionally, the products of the Gag polyproteins of infectious retroviruses perform highly complex orchestrated tasks during the assembly, budding, maturation, and infection stages of the viral replication cycle. During viral assembly, the proteins form membrane associations and self-associations that ultimately result in budding of an immature virion from the infected cell. Gag precursors also function during viral assembly to selectively bind and package two plus strands of genomic RNA. Endogenous Gag proteins may have kept, lost or modified their original function during evolution. The sequence is that of Endogenous retrovirus group K member 6 Gag polyprotein (ERVK-6) from Homo sapiens (Human).